A 692-amino-acid chain; its full sequence is Polyribonucleotide nucleotidyltransferase (692 aa).

Residues Asp-484 and Asp-490 each coordinate Mg(2+). One can recognise a KH domain in the interval 551–614 (PKYFIHKISQ…ALVERVKSIT (64 aa)). The region spanning 620–688 (GAVYTGKVKT…NRGRIRLSRK (69 aa)) is the S1 motif domain.

The protein belongs to the polyribonucleotide nucleotidyltransferase family. Requires Mg(2+) as cofactor.

The protein resides in the cytoplasm. The enzyme catalyses RNA(n+1) + phosphate = RNA(n) + a ribonucleoside 5'-diphosphate. In terms of biological role, involved in mRNA degradation. Catalyzes the phosphorolysis of single-stranded polyribonucleotides processively in the 3'- to 5'-direction. The chain is Polyribonucleotide nucleotidyltransferase from Desulfotalea psychrophila (strain LSv54 / DSM 12343).